The primary structure comprises 116 residues: Large ribosomal subunit protein bL20 (116 aa).

Belongs to the bacterial ribosomal protein bL20 family.

Its function is as follows. Binds directly to 23S ribosomal RNA and is necessary for the in vitro assembly process of the 50S ribosomal subunit. It is not involved in the protein synthesizing functions of that subunit. In Mycoplasmopsis fermentans (Mycoplasma fermentans), this protein is Large ribosomal subunit protein bL20 (rplT).